The primary structure comprises 253 residues: Probable U2 small nuclear ribonucleoprotein A' (253 aa).

4 LRR repeats span residues 20–41 (NMRE…GVTR), 43–64 (QFDV…PTFS), 65–86 (RLNT…IATK), and 89–110 (NLKT…EPLA). The 39-residue stretch at 123 to 161 (NPITHKDNYRMYMIYKLPTVRVIDFNRVRLTEREAAKKM) folds into the LRRCT domain. Disordered regions lie at residues 163-205 (KGKS…EDRE) and 232-253 (VPEK…AMES). Residues 169-182 (KARDAIQKSVHTED) show a composition bias toward basic and acidic residues.

It belongs to the U2 small nuclear ribonucleoprotein A family. In terms of assembly, interacts with rnp-3.

Its subcellular location is the nucleus. This protein is associated with sn-RNP U2. It helps the A' protein to bind stem loop IV of U2 snRNA. Required maternally for early embryonic development and zygotically for germline and somatic development. Has a role in the switch from mitosis to meiosis. Might function in alternative splicing. This is Probable U2 small nuclear ribonucleoprotein A' (mog-2) from Caenorhabditis elegans.